A 160-amino-acid chain; its full sequence is Cyclic pyranopterin monophosphate synthase (160 aa).

Residues 73-75 and 110-111 contribute to the substrate site; these read LCH and ME. Asp-125 is a catalytic residue.

It belongs to the MoaC family. Homohexamer; trimer of dimers.

The catalysed reaction is (8S)-3',8-cyclo-7,8-dihydroguanosine 5'-triphosphate = cyclic pyranopterin phosphate + diphosphate. It participates in cofactor biosynthesis; molybdopterin biosynthesis. Functionally, catalyzes the conversion of (8S)-3',8-cyclo-7,8-dihydroguanosine 5'-triphosphate to cyclic pyranopterin monophosphate (cPMP). This chain is Cyclic pyranopterin monophosphate synthase, found in Pseudomonas aeruginosa (strain LESB58).